We begin with the raw amino-acid sequence, 264 residues long: Galectin-3 (264 aa).

The tract at residues 1–105 is disordered; it reads MADSFSLNDA…GAFPGQPGAP (105 aa). A2 bears the N-acetylalanine mark. S6 carries the phosphoserine; by CK1 modification. 8 consecutive repeat copies span residues 35-43, 44-52, 53-61, 62-70, 71-79, 80-88, 89-97, and 98-107. The tract at residues 35–114 is 9 X 9 AA tandem repeats of Y-P-G-X(3)-P-[GS]-A; sequence YPGAAYPGAY…PGAYPQCSGG (80 aa). Low complexity predominate over residues 37–46; that stretch reads GAAYPGAYPG. Positions 47 to 75 are enriched in pro residues; it reads QAPPGAYPGQAPPGAYPGQAPPSAYPGPT. Residues 76–105 show a composition bias toward low complexity; it reads APGAYPGPTAPGAYPGQPAPGAFPGQPGAP. One copy of the 9; truncated repeat lies at 108-114; sequence YPQCSGG. The 131-residue stretch at 132–262 folds into the Galectin domain; that stretch reads YDLPLPGGVM…DITLTSANHA (131 aa). 195–201 provides a ligand contact to a beta-D-galactoside; it reads WGKEERQ. At S202 the chain carries Phosphoserine. Positions 240-255 match the Nuclear export signal motif; sequence KNLREISQLGISGDIT.

As to quaternary structure, probably forms homo- or heterodimers. Interacts with DMBT1. Interacts with CD6 and ALCAM. Forms a complex with the ITGA3, ITGB1 and CSPG4. Interacts with LGALS3BP, LYPD3, ZFTRAF1 and UACA. Interacts with TRIM16; this interaction mediates autophagy of damage endomembranes. Interacts with and inhibits by binding NCR3/NKp30. In terms of tissue distribution, the highest levels are found in activated macrophages.

The protein resides in the cytoplasm. It is found in the nucleus. It localises to the secreted. Its function is as follows. Galactose-specific lectin which binds IgE. May mediate with the alpha-3, beta-1 integrin the stimulation by CSPG4 of endothelial cells migration. Together with DMBT1, required for terminal differentiation of columnar epithelial cells during early embryogenesis. In the nucleus: acts as a pre-mRNA splicing factor. Involved in acute inflammatory responses including neutrophil activation and adhesion, chemoattraction of monocytes macrophages, opsonization of apoptotic neutrophils, and activation of mast cells. Together with TRIM16, coordinates the recognition of membrane damage with mobilization of the core autophagy regulators ATG16L1 and BECN1 in response to damaged endomembranes. When secreted, interacts with NK cell-activating receptor NCR3/NKp30 acting as an inhibitory ligand which antagonizes NK cell attack. The polypeptide is Galectin-3 (Lgals3) (Mus musculus (Mouse)).